The sequence spans 340 residues: Galactoside alpha-(1,2)-fucosyltransferase 2 (340 aa).

The Cytoplasmic segment spans residues 1-7 (MLSMQAS). A helical; Signal-anchor for type II membrane protein transmembrane segment spans residues 8–28 (FFFPTGPFILFVFTASTIFHL). The Lumenal portion of the chain corresponds to 29 to 340 (QQRMVKIQPT…EADLSPLLKH (312 aa)). Residues Asn185, Asn251, Asn279, and Asn305 are each glycosylated (N-linked (GlcNAc...) asparagine).

It is found in the golgi apparatus. Its subcellular location is the golgi stack membrane. The enzyme catalyses a beta-D-galactosyl-(1-&gt;3)-N-acetyl-beta-D-glucosaminyl derivative + GDP-beta-L-fucose = an alpha-L-Fuc-(1-&gt;2)-beta-D-Gal-(1-&gt;3)-beta-D-GlcNAc derivative + GDP + H(+). It carries out the reaction a beta-D-galactosyl-(1-&gt;4)-N-acetyl-beta-D-glucosaminyl derivative + GDP-beta-L-fucose = an alpha-L-Fuc-(1-&gt;2)-beta-D-Gal-(1-&gt;4)-beta-D-GlcNAc derivative + GDP + H(+). It catalyses the reaction a neolactoside nLc4Cer + GDP-beta-L-fucose = a neolactoside IV(2)-alpha-Fuc-nLc4Cer + GDP + H(+). The catalysed reaction is a neolactoside nLc4Cer(d18:1(4E)) + GDP-beta-L-fucose = a neolactoside IV(2)-alpha-Fuc-nLc4Cer(d18:1(4E)) + GDP + H(+). The enzyme catalyses a ganglioside GM1 + GDP-beta-L-fucose = a ganglioside Fuc-GM1 + GDP + H(+). It carries out the reaction a ganglioside GA1 + GDP-beta-L-fucose = a ganglioside Fuc-GA1 + GDP + H(+). It catalyses the reaction Lc4Cer + GDP-beta-L-fucose = alpha-L-fucosyl-(1-&gt;2)-beta-D-galactosyl-(1-&gt;3)-N-acetyl-beta-D-glucosaminyl-(1-&gt;3)-beta-D-galactosyl-(1-&gt;4)-beta-D-glucosyl-(1&lt;-&gt;1')-ceramide + GDP + H(+). The catalysed reaction is a beta-D-Gal-(1-&gt;3)-beta-D-GlcNAc-(1-&gt;3)-beta-D-Gal-(1-&gt;4)-beta-D-Glc-(1&lt;-&gt;1')-Cer(d18:1(4E)) + GDP-beta-L-fucose = alpha-L-fucosyl-(1-&gt;2)- beta-D-galactosyl-(1-&gt;3)-N-acetyl-beta-D-glucosaminyl-(1-&gt;3)-beta-D-galactosyl-(1-&gt;4)-beta-D-glucosyl-(1&lt;-&gt;1')-N-acylsphing-4-enine + GDP + H(+). The enzyme catalyses a ganglioside GD1b + GDP-beta-L-fucose = a ganglioside Fuc-GD1b + GDP + H(+). It carries out the reaction a ganglioside GM1 (d18:1(4E)) + GDP-beta-L-fucose = a ganglioside Fuc-GM1 (d18:1(4E)) + GDP + H(+). It catalyses the reaction a globoside GalGb4Cer (d18:1(4E)) + GDP-beta-L-fucose = a globoside Globo-H (d18:1(4E)) + GDP + H(+). The catalysed reaction is a lactoside III(4)-a-Fuc-Lc4Cer + GDP-beta-L-fucose = a lactoside IV(2),III(4)-a-[Fuc]2-Lc4Cer + GDP + H(+). The enzyme catalyses beta-D-galactosyl-(1-&gt;3)-N-acetyl-D-galactosamine + GDP-beta-L-fucose = alpha-L-fucosyl-(1-&gt;2)-beta-D-galactosyl-(1-&gt;3)-N-acetyl-D-galactosamine + GDP + H(+). It functions in the pathway protein modification; protein glycosylation. Catalyzes the transfer of L-fucose, from a guanosine diphosphate-beta-L-fucose, to the terminal galactose on both O- and N-linked glycans chains of cell surface glycoproteins and glycolipids and the resulting epitope regulates several processes such as cell-cell interaction including host-microbe interaction, cell surface expression and cell proliferation. Preferentially fucosylates gangliosides GA1 and GM1 in the antrum, cecum and colon and in the female reproductive organs. Fucosylated host glycoproteins or glycolipids mediate interaction with intestinal microbiota influencing its composition. Creates a soluble precursor oligosaccharide FuC-alpha ((1,2)Galbeta-) called the H antigen which is an essential substrate for the final step in the soluble ABO blood group antigen synthesis pathway. This Sus scrofa (Pig) protein is Galactoside alpha-(1,2)-fucosyltransferase 2.